We begin with the raw amino-acid sequence, 158 residues long: uncharacterized protein (158 aa).

Residues 1–18 show a composition bias toward polar residues; sequence MDLASEITSATQTSSLCS. Disordered regions lie at residues 1 to 20, 66 to 94, and 111 to 158; these read MDLA…CSSG, LRDL…KPCL, and GSSG…GEEF. Residues 72-90 show a composition bias toward low complexity; sequence RGSTSSSRSPSRPVSTSAS. Polar residues-rich tracts occupy residues 111–120 and 149–158; these read GSSGHLQSPG and LSHSAQGEEF.

This is an uncharacterized protein from Homo sapiens (Human).